The sequence spans 103 residues: Insulin (103 aa).

A signal peptide spans 1–20; it reads IQSLPLLALLALSGPGTSHA. 3 cysteine pairs are disulfide-bonded: Cys27/Cys89, Cys39/Cys102, and Cys88/Cys93. Positions 53 to 80 are cleaved as a propeptide — c peptide; that stretch reads DAEHPLVNGPLHGEVGDLPFQQEEFEKV.

It belongs to the insulin family. As to quaternary structure, heterodimer of a B chain and an A chain linked by two disulfide bonds.

The protein resides in the secreted. Insulin decreases blood glucose concentration. It increases cell permeability to monosaccharides, amino acids and fatty acids. It accelerates glycolysis, the pentose phosphate cycle, and glycogen synthesis in liver. The sequence is that of Insulin (INS) from Selasphorus rufus (Rufous hummingbird).